We begin with the raw amino-acid sequence, 379 residues long: Succinyl-diaminopimelate desuccinylase (379 aa).

Residue His70 participates in Zn(2+) binding. Asp72 is an active-site residue. Asp103 provides a ligand contact to Zn(2+). Glu137 serves as the catalytic Proton acceptor. The Zn(2+) site is built by Glu138, Glu166, and His352.

This sequence belongs to the peptidase M20A family. DapE subfamily. In terms of assembly, homodimer. Zn(2+) is required as a cofactor. Requires Co(2+) as cofactor.

The catalysed reaction is N-succinyl-(2S,6S)-2,6-diaminopimelate + H2O = (2S,6S)-2,6-diaminopimelate + succinate. The protein operates within amino-acid biosynthesis; L-lysine biosynthesis via DAP pathway; LL-2,6-diaminopimelate from (S)-tetrahydrodipicolinate (succinylase route): step 3/3. Functionally, catalyzes the hydrolysis of N-succinyl-L,L-diaminopimelic acid (SDAP), forming succinate and LL-2,6-diaminopimelate (DAP), an intermediate involved in the bacterial biosynthesis of lysine and meso-diaminopimelic acid, an essential component of bacterial cell walls. In Burkholderia ambifaria (strain ATCC BAA-244 / DSM 16087 / CCUG 44356 / LMG 19182 / AMMD) (Burkholderia cepacia (strain AMMD)), this protein is Succinyl-diaminopimelate desuccinylase.